The chain runs to 213 residues: Pyridoxine/pyridoxamine 5'-phosphate oxidase (213 aa).

Residues 60 to 65 (RMVLMK), 75 to 76 (YS), K82, and Q104 each bind FMN. K65 contacts substrate. Residues Y122 and R126 each coordinate substrate. FMN-binding positions include 139 to 140 (QS) and W184. 190-192 (RLH) is a binding site for substrate. R194 is an FMN binding site.

It belongs to the pyridoxamine 5'-phosphate oxidase family. Homodimer. FMN serves as cofactor.

It catalyses the reaction pyridoxamine 5'-phosphate + O2 + H2O = pyridoxal 5'-phosphate + H2O2 + NH4(+). The catalysed reaction is pyridoxine 5'-phosphate + O2 = pyridoxal 5'-phosphate + H2O2. It participates in cofactor metabolism; pyridoxal 5'-phosphate salvage; pyridoxal 5'-phosphate from pyridoxamine 5'-phosphate: step 1/1. The protein operates within cofactor metabolism; pyridoxal 5'-phosphate salvage; pyridoxal 5'-phosphate from pyridoxine 5'-phosphate: step 1/1. Catalyzes the oxidation of either pyridoxine 5'-phosphate (PNP) or pyridoxamine 5'-phosphate (PMP) into pyridoxal 5'-phosphate (PLP). In Bradyrhizobium diazoefficiens (strain JCM 10833 / BCRC 13528 / IAM 13628 / NBRC 14792 / USDA 110), this protein is Pyridoxine/pyridoxamine 5'-phosphate oxidase.